Here is a 207-residue protein sequence, read N- to C-terminus: MALGWLHTAKFLTTAPQLHFLPALDVPEIAFVGRSNAGKSTCINTLTQQKQLAFASKKPGRTQHINLFSLGKQGVTDAVFADLPGYGYAAVPKQDKIRWQQVMANYLVTRENLKAIVLMCDPRHGLTELDEILLDIVRPRVEEGLKFLVVLTKADKLTRTEQTKALSIMKLQAGGGEVRLFSATKRQGIDDVATLLWQWAHPADGAA.

One can recognise an EngB-type G domain in the interval 25–202 (DVPEIAFVGR…ATLLWQWAHP (178 aa)). Residues 33–40 (GRSNAGKS), 60–64 (GRTQH), 82–85 (DLPG), 152–155 (TKAD), and 181–183 (FSA) contribute to the GTP site. Ser-40 and Thr-62 together coordinate Mg(2+).

The protein belongs to the TRAFAC class TrmE-Era-EngA-EngB-Septin-like GTPase superfamily. EngB GTPase family. The cofactor is Mg(2+).

Its function is as follows. Necessary for normal cell division and for the maintenance of normal septation. This Albidiferax ferrireducens (strain ATCC BAA-621 / DSM 15236 / T118) (Rhodoferax ferrireducens) protein is Probable GTP-binding protein EngB.